The primary structure comprises 203 residues: Akirin-2 (203 aa).

2 positions are modified to phosphoserine: Ser-18 and Ser-21. A Nuclear localization signal motif is present at residues 22-27 (PKRRRC). Position 57 is a phosphoserine (Ser-57). The SYVS motif signature appears at 200 to 203 (SYVS).

Belongs to the akirin family. As to quaternary structure, homodimer. Interacts with IPO9; the interaction is direct. Associates with 20S and 26S proteasomes. Interacts with SMARCD1; promoting SWI/SNF complex recruitment. Interacts with NFKBIZ. Interacts with YWHAB. In terms of processing, polyubiquitinated. Polyubiquitination is dependent of UBR5 that extends pre-ubiquitinated AKIRIN2. As to expression, widely expressed. Most abundant in the lung, followed by the skeletal muscle, heart, liver, fat, thymus, lymph node, small intestine, kidney and spleen. In skeletal muscle, expressed at higher level in fast extensor digitorum longus (EDL) and longissimus lumborum (LL) muscles than in slow soleus (SOL) muscles.

The protein localises to the nucleus. Its subcellular location is the cytoplasm. It localises to the membrane. Functionally, molecular adapter that acts as a bridge between a variety of multiprotein complexes, and which is involved in embryonic development, immunity, myogenesis and brain development. Plays a key role in nuclear protein degradation by promoting import of proteasomes into the nucleus: directly binds to fully assembled 20S proteasomes at one end and to nuclear import receptor IPO9 at the other end, bridging them together and mediating the import of pre-assembled proteasome complexes through the nuclear pore. Involved in innate immunity by regulating the production of interleukin-6 (IL6) downstream of Toll-like receptor (TLR): acts by bridging the NF-kappa-B inhibitor NFKBIZ and the SWI/SNF complex, leading to promote induction of IL6. Also involved in adaptive immunity by promoting B-cell activation. Involved in brain development: required for the survival and proliferation of cerebral cortical progenitor cells. Involved in myogenesis: required for skeletal muscle formation and skeletal development, possibly by regulating expression of muscle differentiation factors. The chain is Akirin-2 from Sus scrofa (Pig).